Reading from the N-terminus, the 50-residue chain is MLFSGDELANNTVLELRAQGQLSAFNKQPNLTFETDAPAILQQAVAQTRE.

This is an uncharacterized protein from Haemophilus influenzae (strain ATCC 51907 / DSM 11121 / KW20 / Rd).